Here is a 602-residue protein sequence, read N- to C-terminus: Type 2 DNA topoisomerase 6 subunit B (602 aa).

ATP contacts are provided by residues asparagine 40, aspartate 71, 92–93 (SR), 102–109 (GQQGIGIS), and lysine 425.

This sequence belongs to the TOP6B family. In terms of assembly, homodimer. Heterotetramer of two Top6A and two Top6B chains.

It catalyses the reaction ATP-dependent breakage, passage and rejoining of double-stranded DNA.. Functionally, relaxes both positive and negative superturns and exhibits a strong decatenase activity. In Archaeoglobus fulgidus (strain ATCC 49558 / DSM 4304 / JCM 9628 / NBRC 100126 / VC-16), this protein is Type 2 DNA topoisomerase 6 subunit B.